Here is a 247-residue protein sequence, read N- to C-terminus: Aliphatic sulfonates import ATP-binding protein SsuB 3 (247 aa).

Positions 28–242 (VSVRGLQRRY…ALRSILLEEL (215 aa)) constitute an ABC transporter domain. 60–67 (GESGCGKT) provides a ligand contact to ATP.

It belongs to the ABC transporter superfamily. Aliphatic sulfonates importer (TC 3.A.1.17.2) family. As to quaternary structure, the complex is composed of two ATP-binding proteins (SsuB), two transmembrane proteins (SsuC) and a solute-binding protein (SsuA).

The protein resides in the cell inner membrane. It catalyses the reaction ATP + H2O + aliphatic sulfonate-[sulfonate-binding protein]Side 1 = ADP + phosphate + aliphatic sulfonateSide 2 + [sulfonate-binding protein]Side 1.. Functionally, part of the ABC transporter complex SsuABC involved in aliphatic sulfonates import. Responsible for energy coupling to the transport system. The protein is Aliphatic sulfonates import ATP-binding protein SsuB 3 of Paraburkholderia xenovorans (strain LB400).